The sequence spans 669 residues: MKIFVGNVDGADTTPEELAALFAPYGTVMSCAVMKQFAFVHMRENAGALRAIEALHGHELRPGRALVVEMSRPRPLNTWKIFVGNVSAACTSQELRSLFERRGRVIECDVVKDYAFVHMEKEADAKAAIAQLNGKEVKGKRINVELSTKGQKKGPGLAVQSGDKTKKPGAGDTAFPGTGGFSATFDYQQAFGNSTGGFDGQARQPTPPFFGRDRSPLRRSPPRASYVAPLTAQPATYRAQPSVSLGAAYRAQPSASLGVGYRTQPMTAQAASYRAQPSVSLGAPYRGQLASPSSQSAAASSLGPYGGAQPSASALSSYGGQAAAASSLNSYGAQGSSLASYGNQPSSYGAQAASSYGVRAAASSYNTQGAASSLGSYGAQAASYGAQSAASSLAYGAQAASYNAQPSASYNAQSAPYAAQQAASYSSQPAAYVAQPATAAAYASQPAAYAAQATTPMAGSYGAQPVVQTQLNSYGAQASMGLSGSYGAQSAAAATGSYGAAAAYGAQPSATLAAPHRTQSSASLAASYAAQQHPQAAASYRGQPGNAYDGAGQPSAAYLSMSQGAVANANSTPPPYERTRLSPPRASYDDPYKKAVAMSKRYGSDRRLAELSDYRRLSESQLSFRRSPTKSSLDYRRLPDAHSDYARYSGSYNDYLRAAQMHSGYQRRM.

RRM domains are found at residues 1 to 73 and 79 to 149; these read MKIF…MSRP and WKIF…LSTK. Residues K126, K135, K138, K149, and K153 each participate in a glycyl lysine isopeptide (Lys-Gly) (interchain with G-Cter in SUMO2) cross-link. Disordered stretches follow at residues 147–175 and 193–232; these read STKG…DTAF and NSTG…PLTA. S161 is subject to Phosphoserine. N6-acetyllysine; alternate is present on K164. K164 participates in a covalent cross-link: Glycyl lysine isopeptide (Lys-Gly) (interchain with G-Cter in SUMO2); alternate. Position 206 is a phosphothreonine (T206). 6 positions are modified to phosphoserine: S220, S242, S244, S256, S272, and S280. Residues 284–303 form a disordered region; it reads PYRGQLASPSSQSAAASSLG. Residues 287–303 show a composition bias toward low complexity; that stretch reads GQLASPSSQSAAASSLG. A TRBP-interacting domain; interaction with STIL region spans residues 307 to 354; that stretch reads GAQPSASALSSYGGQAAAASSLNSYGAQGSSLASYGNQPSSYGAQAAS. Phosphoserine is present on residues S520, S523, S527, and S562. The interval 566-592 is disordered; sequence VANANSTPPPYERTRLSPPRASYDDPY. T572 carries the phosphothreonine modification. S582 carries the phosphoserine modification. A Glycyl lysine isopeptide (Lys-Gly) (interchain with G-Cter in SUMO2) cross-link involves residue K600. S618, S620, S623, S627, S643, and S649 each carry phosphoserine.

Interacts with NCOA6, CITED1 and XRCC5/KU86. Interacts with SS18. Interacts with STIL and interferes with its interaction with CPAP. Interacts with gamma-tubulin. Part of the HDP-RNP complex composed of at least HEXIM1, PRKDC, XRCC5, XRCC6, paraspeckle proteins (SFPQ, NONO, PSPC1, RBM14, and MATR3) and NEAT1 RNA.

The protein localises to the nucleus. It is found in the nucleolus. It localises to the cytoplasm. Its function is as follows. May function as a nuclear receptor coactivator, enhancing transcription through other coactivators such as NCOA6 and CITED1. Regulates centriole biogenesis by suppressing the formation of aberrant centriolar protein complexes in the cytoplasm and thus preserving mitotic spindle integrity. Prevents the formation of the STIL-CPAP complex (which can induce the formation of aberrant centriolar protein complexes) by interfering with the interaction of STIL with CPAP. Plays a role in the regulation of DNA virus-mediated innate immune response by assembling into the HDP-RNP complex, a complex that serves as a platform for IRF3 phosphorylation and subsequent innate immune response activation through the cGAS-STING pathway. The chain is RNA-binding protein 14 (RBM14) from Pongo abelii (Sumatran orangutan).